The sequence spans 354 residues: Protein RecA (354 aa).

65 to 72 (GPESSGKT) is an ATP binding site.

Belongs to the RecA family.

Its subcellular location is the cytoplasm. Its function is as follows. Can catalyze the hydrolysis of ATP in the presence of single-stranded DNA, the ATP-dependent uptake of single-stranded DNA by duplex DNA, and the ATP-dependent hybridization of homologous single-stranded DNAs. It interacts with LexA causing its activation and leading to its autocatalytic cleavage. The sequence is that of Protein RecA from Pseudomonas syringae pv. syringae (strain B728a).